A 132-amino-acid polypeptide reads, in one-letter code: ALADAALRQCMPCGPGDRGNCFGPSICCGAELGCYVGTAETLRCAEENYLPSPCRAGGQPCGAGGRCAAPGICCSDETCSLEPACLEEAGERGGEPAQKNLTGLDASAGDFLLKLMHLAANRQQQGGKGPLL.

7 cysteine pairs are disulfide-bonded: Cys-10–Cys-54, Cys-13–Cys-27, Cys-21–Cys-44, Cys-28–Cys-34, Cys-61–Cys-73, Cys-67–Cys-85, and Cys-74–Cys-79.

The protein belongs to the vasopressin/oxytocin family.

The protein localises to the secreted. In terms of biological role, neurophysin 2 specifically binds vasopressin. In Struthio camelus (Common ostrich), this protein is Neurophysin 2.